The chain runs to 460 residues: 4-O-methyl-glucuronoyl methylesterase (460 aa).

The N-terminal stretch at 1–17 (MASRFFALLLLAIPIQA) is a signal peptide. Gln18 carries the pyrrolidone carboxylic acid modification. Residues 18–53 (QSPVWGQCGGIGWSGPTTCVGGATCVSYNPYYSQCI) enclose the CBM1 domain. 3 disulfides stabilise this stretch: Cys96–Cys131, Cys277–Cys412, and Cys309–Cys384. The short motif at 276–281 (GCSRNG) is the GXSYXG catalytic site motif element. Ser278 serves as the catalytic Nucleophile. Positions 282, 324, 332, and 375 each coordinate substrate. The active-site Proton donor/acceptor is His411. N-linked (GlcNAc...) asparagine glycosylation occurs at Asn447.

This sequence belongs to the carbohydrate esterase 15 (CE15) family.

It is found in the secreted. The catalysed reaction is a 4-O-methyl-alpha-D-glucuronosyl ester derivative + H2O = 4-O-methyl-alpha-D-glucuronate derivative + an alcohol + H(+). Glucuronoyl esterase which may play a significant role in biomass degradation, as it is considered to disconnect hemicellulose from lignin through the hydrolysis of the ester bond between 4-O-methyl-D-glucuronic acid residues of glucuronoxylans and aromatic alcohols of lignin. Does not hydrolyze substrates of other carbohydrate esterases such as acetylxylan esterase, acetyl esterase and feruloyl esterase. The sequence is that of 4-O-methyl-glucuronoyl methylesterase from Hypocrea jecorina (strain QM6a) (Trichoderma reesei).